The sequence spans 154 residues: Putative NADPH-dependent 7-cyano-7-deazaguanine reductase (154 aa).

Catalysis depends on Asp-52, which acts as the Proton donor. Substrate is bound by residues 67-69 (VES) and 86-87 (HE).

This sequence belongs to the GTP cyclohydrolase I family. QueF type 1 subfamily.

The protein resides in the cytoplasm. The catalysed reaction is 7-aminomethyl-7-carbaguanine + 2 NADP(+) = 7-cyano-7-deazaguanine + 2 NADPH + 3 H(+). Its pathway is tRNA modification; tRNA-queuosine biosynthesis. In terms of biological role, catalyzes the NADPH-dependent reduction of 7-cyano-7-deazaguanine (preQ0) to 7-aminomethyl-7-deazaguanine (preQ1). In Streptococcus pneumoniae serotype 4 (strain ATCC BAA-334 / TIGR4), this protein is Putative NADPH-dependent 7-cyano-7-deazaguanine reductase.